We begin with the raw amino-acid sequence, 245 residues long: 1-(5-phosphoribosyl)-5-[(5-phosphoribosylamino)methylideneamino] imidazole-4-carboxamide isomerase (245 aa).

The Proton acceptor role is filled by Asp7. The Proton donor role is filled by Asp129.

This sequence belongs to the HisA/HisF family.

The protein resides in the cytoplasm. The enzyme catalyses 1-(5-phospho-beta-D-ribosyl)-5-[(5-phospho-beta-D-ribosylamino)methylideneamino]imidazole-4-carboxamide = 5-[(5-phospho-1-deoxy-D-ribulos-1-ylimino)methylamino]-1-(5-phospho-beta-D-ribosyl)imidazole-4-carboxamide. It functions in the pathway amino-acid biosynthesis; L-histidine biosynthesis; L-histidine from 5-phospho-alpha-D-ribose 1-diphosphate: step 4/9. In Yersinia pestis bv. Antiqua (strain Antiqua), this protein is 1-(5-phosphoribosyl)-5-[(5-phosphoribosylamino)methylideneamino] imidazole-4-carboxamide isomerase.